Here is a 319-residue protein sequence, read N- to C-terminus: Olfactory receptor 5B21 (319 aa).

Residues 1–26 (MTSMENITEVTEFILLGLTDDPNLQV) are Extracellular-facing. N-linked (GlcNAc...) asparagine glycosylation is present at asparagine 6. A helical membrane pass occupies residues 27–47 (PLLLIFLFIYLVTLIGNGGMM). Over 48–55 (VIIFSDSH) the chain is Cytoplasmic. The helical transmembrane segment at 56–76 (LHTPMYFFLSNLSFVDLGYSS) threads the bilayer. The Extracellular portion of the chain corresponds to 77–100 (AVAPKMVAALQSGNKVISYNGCAA). Cysteine 98 and cysteine 190 form a disulfide bridge. Residues 101-121 (QFFFFVGFATVECYLLASMAY) traverse the membrane as a helical segment. At 122-134 (DRHAAVCRPLHYT) the chain is on the cytoplasmic side. Residues 135–155 (TTMTTGVCTILTIGSYTCGFL) traverse the membrane as a helical segment. The Extracellular segment spans residues 156-197 (NASIHAADTFKLSFCGSNKINHFFCDIPPLLALACSSTHISK). The chain crosses the membrane as a helical span at residues 198–218 (LVVFFVVGFNVFFTLLVIIIS). Topologically, residues 219 to 238 (YFFIYIAIQNMKSSEGRKKA) are cytoplasmic. Residues 239–259 (FSTCASHLTAVSIFYGTIIFM) form a helical membrane-spanning segment. The Extracellular segment spans residues 260-272 (YLQPSSGQSMDTD). The helical transmembrane segment at 273–293 (KIASVFYTVVIPMLNPLIYSL) threads the bilayer. The Cytoplasmic segment spans residues 294 to 319 (RNREVKSALWKILNRFYPASFSVSRK).

The protein belongs to the G-protein coupled receptor 1 family.

It is found in the cell membrane. Its function is as follows. Odorant receptor. This chain is Olfactory receptor 5B21, found in Mus musculus (Mouse).